The sequence spans 118 residues: Large ribosomal subunit protein bL20 (118 aa).

Belongs to the bacterial ribosomal protein bL20 family.

In terms of biological role, binds directly to 23S ribosomal RNA and is necessary for the in vitro assembly process of the 50S ribosomal subunit. It is not involved in the protein synthesizing functions of that subunit. The protein is Large ribosomal subunit protein bL20 of Staphylococcus haemolyticus (strain JCSC1435).